Consider the following 426-residue polypeptide: Bile acid CoA-transferase BaiF (426 aa).

Asp168 acts as the Nucleophile in catalysis.

Belongs to the CoA-transferase III family.

It catalyses the reaction lithocholoyl-CoA + cholate = choloyl-CoA + lithocholate. The enzyme catalyses deoxycholoyl-CoA + cholate = choloyl-CoA + deoxycholate. The catalysed reaction is allodeoxycholoyl-CoA + cholate = allodeoxycholate + choloyl-CoA. It carries out the reaction allocholate + deoxycholoyl-CoA = allocholoyl-CoA + deoxycholate. It catalyses the reaction allocholate + lithocholoyl-CoA = allocholoyl-CoA + lithocholate. The enzyme catalyses allocholate + allodeoxycholoyl-CoA = allocholoyl-CoA + allodeoxycholate. The catalysed reaction is lithocholoyl-CoA + chenodeoxycholate = chenodeoxycholoyl-CoA + lithocholate. It carries out the reaction ursodeoxycholate + deoxycholoyl-CoA = ursodeoxycholoyl-CoA + deoxycholate. It catalyses the reaction ursodeoxycholate + lithocholoyl-CoA = ursodeoxycholoyl-CoA + lithocholate. The enzyme catalyses allodeoxycholoyl-CoA + ursodeoxycholate = ursodeoxycholoyl-CoA + allodeoxycholate. The catalysed reaction is beta-muricholate + lithocholoyl-CoA = beta-muricholoyl-CoA + lithocholate. It carries out the reaction beta-muricholate + deoxycholoyl-CoA = beta-muricholoyl-CoA + deoxycholate. It catalyses the reaction beta-muricholate + allodeoxycholoyl-CoA = beta-muricholoyl-CoA + allodeoxycholate. The enzyme catalyses choloyl-CoA + H2O = cholate + CoA + H(+). The catalysed reaction is chenodeoxycholoyl-CoA + H2O = chenodeoxycholate + CoA + H(+). Its pathway is lipid metabolism; bile acid biosynthesis. Its function is as follows. Functions in the bile acid 7alpha-dehydroxylation pathway, which forms secondary bile acids via the 7alpha-dehydroxylation of primary bile acids, and is carried out by intestinal anaerobic bacteria. Acts as a bile acid CoA transferase with broad bile acid substrate specificity. Catalyzes the transfer of the CoA moiety of secondary bile acid-CoA compounds to primary bile acids. Can use lithocholoyl-CoA, deoxycholoyl-CoA and allodeoxycholoyl-CoA as bile acid CoA donors and cholate, allocholate, chenodeoxycholate, ursodeoxycholate, and beta-muricholate as bile acid CoA acceptors. Also displays CoA hydrolase activity, being able to catalyze the hydrolysis of choloyl-CoA, 3-dehydrocholoyl-CoA, and chenodeoxycholoyl-CoA, releasing CoA and the corresponding free bile acid. However, this latter activity may not represent the actual activity of this enzyme, since using a transferase rather than hydrolase, the bacteria conserve the thioester bond energy, saving ATP molecules. Shows no hydrolytic activity with acetyl-CoA, isovaleryl-CoA, palmitoyl-CoA, or phenylacetyl-CoA as substrates. The chain is Bile acid CoA-transferase BaiF from Clostridium scindens (strain JCM 10418 / VPI 12708).